We begin with the raw amino-acid sequence, 329 residues long: Serpentine receptor class alpha-6 (329 aa).

Transmembrane regions (helical) follow at residues valine 26 to isoleucine 46, leucine 68 to leucine 88, tyrosine 104 to isoleucine 124, isoleucine 143 to leucine 163, asparagine 187 to isoleucine 207, isoleucine 238 to isoleucine 258, and phenylalanine 273 to isoleucine 293.

This sequence belongs to the nematode receptor-like protein sra family.

The protein localises to the membrane. In Caenorhabditis elegans, this protein is Serpentine receptor class alpha-6 (sra-6).